The chain runs to 438 residues: tRNA modification GTPase MnmE (438 aa).

Arg21, Glu79, and Lys118 together coordinate (6S)-5-formyl-5,6,7,8-tetrahydrofolate. One can recognise a TrmE-type G domain in the interval 215–362 (GFSIVLIGAP…LEARIEQIVR (148 aa)). Asn225 is a binding site for K(+). Residues 225-230 (NAGKSS), 244-250 (TDIPGTT), and 269-272 (DTAG) each bind GTP. Ser229 contacts Mg(2+). 3 residues coordinate K(+): Thr244, Ile246, and Thr249. Position 250 (Thr250) interacts with Mg(2+). (6S)-5-formyl-5,6,7,8-tetrahydrofolate is bound at residue Lys438.

It belongs to the TRAFAC class TrmE-Era-EngA-EngB-Septin-like GTPase superfamily. TrmE GTPase family. In terms of assembly, homodimer. Heterotetramer of two MnmE and two MnmG subunits. K(+) serves as cofactor.

The protein localises to the cytoplasm. Its function is as follows. Exhibits a very high intrinsic GTPase hydrolysis rate. Involved in the addition of a carboxymethylaminomethyl (cmnm) group at the wobble position (U34) of certain tRNAs, forming tRNA-cmnm(5)s(2)U34. In Maricaulis maris (strain MCS10) (Caulobacter maris), this protein is tRNA modification GTPase MnmE.